The chain runs to 221 residues: Enolase-phosphatase E1 (221 aa).

It belongs to the HAD-like hydrolase superfamily. MasA/MtnC family. Monomer. Mg(2+) serves as cofactor.

The catalysed reaction is 5-methylsulfanyl-2,3-dioxopentyl phosphate + H2O = 1,2-dihydroxy-5-(methylsulfanyl)pent-1-en-3-one + phosphate. It participates in amino-acid biosynthesis; L-methionine biosynthesis via salvage pathway; L-methionine from S-methyl-5-thio-alpha-D-ribose 1-phosphate: step 3/6. Its pathway is amino-acid biosynthesis; L-methionine biosynthesis via salvage pathway; L-methionine from S-methyl-5-thio-alpha-D-ribose 1-phosphate: step 4/6. Its function is as follows. Bifunctional enzyme that catalyzes the enolization of 2,3-diketo-5-methylthiopentyl-1-phosphate (DK-MTP-1-P) into the intermediate 2-hydroxy-3-keto-5-methylthiopentenyl-1-phosphate (HK-MTPenyl-1-P), which is then dephosphorylated to form the acireductone 1,2-dihydroxy-3-keto-5-methylthiopentene (DHK-MTPene). The sequence is that of Enolase-phosphatase E1 from Hydrogenobaculum sp. (strain Y04AAS1).